The sequence spans 750 residues: E3 ubiquitin-protein ligase rfwd3.S (750 aa).

A disordered region spans residues 92 to 206 (RQAAEQRSSV…GAAPPAEPAP (115 aa)). Over residues 105–116 (RVQRRSTRRHQR) the composition is skewed to basic residues. A compositionally biased stretch (polar residues) spans 122–144 (TAGTSSRAALSNFFQINRTQGVA). Acidic residues predominate over residues 168–181 (SSDETVELSEEEEG). An RING-type; degenerate zinc finger spans residues 263-307 (CAICFEPWTNAGQHRLSALRCGHLFGFTCIERWLKGGAAKCPQCN). Low complexity predominate over residues 387–405 (TSMQASSSRSTISGSLSSS). The disordered stretch occupies residues 387–406 (TSMQASSSRSTISGSLSSSQ). WD repeat units follow at residues 470-510 (IHSK…VVQT), 512-552 (NTGR…NCVQ), and 558-603 (GSRC…YRPH).

Requires [4Fe-4S] cluster as cofactor.

It localises to the nucleus. The protein localises to the PML body. Its subcellular location is the cytoplasm. It catalyses the reaction S-ubiquitinyl-[E2 ubiquitin-conjugating enzyme]-L-cysteine + [acceptor protein]-L-lysine = [E2 ubiquitin-conjugating enzyme]-L-cysteine + N(6)-ubiquitinyl-[acceptor protein]-L-lysine.. It functions in the pathway protein modification; protein ubiquitination. Functionally, E3 ubiquitin-protein ligase required for the repair of DNA interstrand cross-links (ICL) in response to DNA damage. Plays a key role in RPA-mediated DNA damage signaling and repair. Required to translesion DNA synthesis across DNA-protein cross-link adducts by catalyzing ubiquitination of proteins on single-stranded DNA (ssDNA). Mediates ubiquitination of the hmces DNA-protein cross-link, possibly promoting its degradation. The chain is E3 ubiquitin-protein ligase rfwd3.S (rfwd3.S) from Xenopus laevis (African clawed frog).